The primary structure comprises 452 residues: 3-phosphoshikimate 1-carboxyvinyltransferase (452 aa).

Residues Lys24, Ser25, and Arg29 each contribute to the 3-phosphoshikimate site. Position 24 (Lys24) interacts with phosphoenolpyruvate. Residues Gly95 and Arg123 each contribute to the phosphoenolpyruvate site. Residues Ser167, Gln169, Asp319, and Lys346 each coordinate 3-phosphoshikimate. Gln169 lines the phosphoenolpyruvate pocket. The Proton acceptor role is filled by Asp319. Residues Arg350 and Arg394 each contribute to the phosphoenolpyruvate site.

It belongs to the EPSP synthase family. As to quaternary structure, monomer.

The protein localises to the cytoplasm. The enzyme catalyses 3-phosphoshikimate + phosphoenolpyruvate = 5-O-(1-carboxyvinyl)-3-phosphoshikimate + phosphate. Its pathway is metabolic intermediate biosynthesis; chorismate biosynthesis; chorismate from D-erythrose 4-phosphate and phosphoenolpyruvate: step 6/7. In terms of biological role, catalyzes the transfer of the enolpyruvyl moiety of phosphoenolpyruvate (PEP) to the 5-hydroxyl of shikimate-3-phosphate (S3P) to produce enolpyruvyl shikimate-3-phosphate and inorganic phosphate. This is 3-phosphoshikimate 1-carboxyvinyltransferase from Phenylobacterium zucineum (strain HLK1).